A 392-amino-acid polypeptide reads, in one-letter code: Small ribosomal subunit protein uS9m (392 aa).

Residues Arg-8–Asp-25 are compositionally biased toward low complexity. Residues Arg-8–Ser-27 are disordered.

The protein belongs to the universal ribosomal protein uS9 family. As to quaternary structure, component of the mitochondrial ribosome small subunit (28S) which comprises a 12S rRNA and about 30 distinct proteins.

It localises to the mitochondrion. This is Small ribosomal subunit protein uS9m (mrps-9) from Caenorhabditis elegans.